A 1822-amino-acid polypeptide reads, in one-letter code: ADP-ribosylation factor guanine nucleotide-exchange factor sec72 (1822 aa).

Disordered stretches follow at residues 1–54 (MQDA…NGMD) and 66–126 (DAVV…RASL). A Phosphoserine modification is found at S44. Residues 72–84 (DINTEDSSLSPAK) show a composition bias toward polar residues. Residues 85-110 (QENEKSPEGIEQKYQEEDLKDDKKSN) show a composition bias toward basic and acidic residues. A phosphoserine mark is found at S122 and S125. The short motif at 547–551 (NYDCD) is the HUS box element. T597 carries the post-translational modification Phosphothreonine. S653 carries the phosphoserine modification. T654 is modified (phosphothreonine). Position 669 is a phosphoserine (S669). The region spanning 701 to 889 (QFESNKQRKK…GFVYDDILKN (189 aa)) is the SEC7 domain. Positions 898–1106 (ELAAIAPLMN…NARVRRKNVN (209 aa)) are HDS1 domain. Phosphoserine is present on S1110. Disordered stretches follow at residues 1111–1131 (NSIR…SLSK) and 1584–1610 (ENEN…TSSI). 2 stretches are compositionally biased toward low complexity: residues 1117 to 1130 (SGST…RSLS) and 1597 to 1610 (SLPE…TSSI). S1606 and S1609 each carry phosphoserine.

It localises to the cytoplasm. The protein resides in the golgi apparatus. It is found in the trans-Golgi network. Its subcellular location is the cytoplasmic vesicle. The protein localises to the COPI-coated vesicle membrane. It localises to the COPII-coated vesicle membrane. In terms of biological role, guanine exchange factor that acts as an activator of arf1 at the trans-Golgi net-work and is thus involved in vesicular budding and traffic between compartments of the Golgi apparatus. Activation of Arf (ADP-ribosylation factor) GTPases is essential for vesicle formation via recruitment of cargo adapters and coat proteins necessary for Golgi trafficking. Involved in the resistance to tamoxifen (TAM), an anticancer drug used to treat estrogen receptor (ER)-positive breast cancer. The chain is ADP-ribosylation factor guanine nucleotide-exchange factor sec72 from Schizosaccharomyces pombe (strain 972 / ATCC 24843) (Fission yeast).